A 140-amino-acid chain; its full sequence is Cysteine desulfuration protein SufE (140 aa).

The Cysteine persulfide intermediate role is filled by cysteine 51.

It belongs to the SufE family. In terms of assembly, homodimer. Interacts with SufS.

It localises to the cytoplasm. Its pathway is cofactor biosynthesis; iron-sulfur cluster biosynthesis. Functionally, participates in cysteine desulfuration mediated by SufS. Cysteine desulfuration mobilizes sulfur from L-cysteine to yield L-alanine and constitutes an essential step in sulfur metabolism for biosynthesis of a variety of sulfur-containing biomolecules. Functions as a sulfur acceptor for SufS, by mediating the direct transfer of the sulfur atom from the S-sulfanylcysteine of SufS, an intermediate product of cysteine desulfuration process. The chain is Cysteine desulfuration protein SufE from Yersinia pseudotuberculosis serotype O:1b (strain IP 31758).